We begin with the raw amino-acid sequence, 340 residues long: MNLLRKILFPFAILYGLITSIRNFLFDKGILKSTSFDLPVIAVGNLSVGGTGKTPQIEYLIRLLSNKYRAATLSRGYKRKSEGFVLADENSNAEILGDEPFQFYQKFPDVQVAVDANRTNGITQLLSQNVKPQVILLDDAYQHRKVKAGFYILLTSYDDLYADDFMLPTGNLRESRSGANRANIVVVTKCPKNLSEEKQAEIRLKLKLSCSQQIFFTYIDYDVEIYGKDEKISAAEIKSESKLLLAGIAKPKPFFEYLKNENDECLTFPDHHHFSDADLESIQNKANGRKIITTEKDYVRLKDSKLVSQLYYLPIKSTFINHQQNFDVSILQYIKENLEP.

47-54 (SVGGTGKT) contributes to the ATP binding site.

The protein belongs to the LpxK family.

The enzyme catalyses a lipid A disaccharide + ATP = a lipid IVA + ADP + H(+). It functions in the pathway glycolipid biosynthesis; lipid IV(A) biosynthesis; lipid IV(A) from (3R)-3-hydroxytetradecanoyl-[acyl-carrier-protein] and UDP-N-acetyl-alpha-D-glucosamine: step 6/6. Its function is as follows. Transfers the gamma-phosphate of ATP to the 4'-position of a tetraacyldisaccharide 1-phosphate intermediate (termed DS-1-P) to form tetraacyldisaccharide 1,4'-bis-phosphate (lipid IVA). The chain is Tetraacyldisaccharide 4'-kinase from Flavobacterium johnsoniae (strain ATCC 17061 / DSM 2064 / JCM 8514 / BCRC 14874 / CCUG 350202 / NBRC 14942 / NCIMB 11054 / UW101) (Cytophaga johnsonae).